We begin with the raw amino-acid sequence, 1247 residues long: SAM and SH3 domain-containing protein 1 (1247 aa).

The interval 1-39 (MEDAGAAGPGPEPEPEPEPEPEPAPEPEPEPKPGAGTSE) is disordered. The span at 13 to 28 (PEPEPEPEPEPAPEPE) shows a compositional bias: acidic residues. Serine 90 is subject to Phosphoserine. Disordered regions lie at residues 126 to 145 (VERK…VGKG), 221 to 257 (AALD…ESVK), and 316 to 344 (FFDG…LDTW). The residue at position 248 (serine 248) is a Phosphoserine. A compositionally biased stretch (low complexity) spans 331–343 (SLTTSPSSSSLDT). Serine 407 bears the Phosphoserine mark. The interval 449–573 (SLGKKVKSVK…DFTPSPYDTD (125 aa)) is disordered. Low complexity-rich tracts occupy residues 468–484 (KYSS…DGMP) and 505–523 (GGSV…SMSG). The span at 524–536 (QTVSTTDSSTSNR) shows a compositional bias: polar residues. The region spanning 554–615 (PFCGRARVHT…KFIYVDVLSE (62 aa)) is the SH3 domain. Phosphoserine is present on serine 614. 2 disordered regions span residues 616–639 (DEEK…KSVE) and 713–810 (DSQG…LNKN). A compositionally biased stretch (basic residues) spans 622–631 (RPTRRRRKGR). Residues 633–697 (PQPKSVEDLL…LTAVELLQEY (65 aa)) enclose the SAM 1 domain. Over residues 746–765 (SAKSSTEPSLKSFSRNQLGN) the composition is skewed to polar residues. 2 positions are modified to phosphoserine: serine 821 and serine 839. 3 disordered regions span residues 846–884 (EPGA…PLEQ), 903–946 (PQKL…LART), and 971–1065 (DAEQ…SELP). The required for interaction with TRAF6 stretch occupies residues 852 to 860 (DVPTEVTEP). Threonine 858 is subject to Phosphothreonine. The span at 1050–1060 (GSPPSTRPPPW) shows a compositional bias: pro residues. In terms of domain architecture, SAM 2 spans 1177–1241 (GCISSVSDWL…LSAARLFKLP (65 aa)).

In terms of assembly, interacts with GNAS. Interacts with IQGAP1. Interacts with TRAF6 (via C-terminus); the interaction is LPS-dependent. Interacts with MAP3K7, CHUK and IKBKB. Expressed ubiquitously, with highest levels in lung, placenta, spleen and thymus. Down-regulated in the majority (74%) of breast tumors in comparison with corresponding normal breast epithelial tissues. Expressed in the epidermis, epidermal keratinocytes, dermal fibroblasts and melanocytes.

It localises to the cytoplasm. Its function is as follows. Is a positive regulator of NF-kappa-B signaling downstream of TLR4 activation. It acts as a scaffold molecule to assemble a molecular complex that includes TRAF6, MAP3K7, CHUK and IKBKB, thereby facilitating NF-kappa-B signaling activation. Regulates TRAF6 and MAP3K7 ubiquitination. Involved in the regulation of cell mobility. Regulates lipolysaccharide (LPS)-induced endothelial cell migration. Is involved in the regulation of skin pigmentation through the control of melanocyte migration in the epidermis. This is SAM and SH3 domain-containing protein 1 (SASH1) from Homo sapiens (Human).